A 298-amino-acid chain; its full sequence is Zinc transport system membrane protein TroC (298 aa).

8 helical membrane passes run 16-36 (VVLG…FAVL), 41-61 (LFGD…FLLT), 68-88 (ILLL…LMVM), 97-117 (GAQG…LTHV), 144-164 (VLLI…FWKE), 187-207 (FMLT…VGVI), 229-249 (VLCA…SVVS), and 255-275 (LSTG…SIML).

This sequence belongs to the ABC-3 integral membrane protein family.

The protein resides in the cell membrane. Part of an ATP-driven transport system TroABCD for zinc. The polypeptide is Zinc transport system membrane protein TroC (troC) (Treponema pallidum (strain Nichols)).